Reading from the N-terminus, the 147-residue chain is UPF0306 protein YhbP (147 aa).

This sequence belongs to the UPF0306 family.

This chain is UPF0306 protein YhbP, found in Escherichia coli O7:K1 (strain IAI39 / ExPEC).